The chain runs to 502 residues: Lysine--tRNA ligase (502 aa).

The Mg(2+) site is built by glutamate 412 and glutamate 419.

Belongs to the class-II aminoacyl-tRNA synthetase family. Homodimer. The cofactor is Mg(2+).

Its subcellular location is the cytoplasm. It carries out the reaction tRNA(Lys) + L-lysine + ATP = L-lysyl-tRNA(Lys) + AMP + diphosphate. The polypeptide is Lysine--tRNA ligase (Histophilus somni (strain 2336) (Haemophilus somnus)).